Here is a 118-residue protein sequence, read N- to C-terminus: Non-specific lipid-transfer protein 5 (118 aa).

The N-terminal stretch at 1–25 (MEGLLKLSTLVIVCMLVTAPMASEA) is a signal peptide. Intrachain disulfides connect Cys-29–Cys-76, Cys-39–Cys-53, Cys-54–Cys-100, and Cys-74–Cys-114.

It belongs to the plant LTP family.

Functionally, plant non-specific lipid-transfer proteins transfer phospholipids as well as galactolipids across membranes. May play a role in wax or cutin deposition in the cell walls of expanding epidermal cells and certain secretory tissues. The chain is Non-specific lipid-transfer protein 5 (LTP5) from Arabidopsis thaliana (Mouse-ear cress).